A 754-amino-acid polypeptide reads, in one-letter code: Bifunctional sesterterpene synthase astC (754 aa).

The first 24 residues, 1 to 24 (MASLEVFVLYLRIFFISFMSRARS), serve as a signal peptide directing secretion. Residues 58–388 (IQYRHSKLVD…RYHFHKPEHW (331 aa)) are sesterterpene synthase. Residues D149 and D153 each coordinate Mg(2+). Residues 389–753 (RQVENVDDDG…LRLLLKRLHV (365 aa)) form a geranylfarnesyl diphosphate synthase region. The span at 392-403 (ENVDDDGNKSDD) shows a compositional bias: basic and acidic residues. The tract at residues 392-414 (ENVDDDGNKSDDSGIAMKDSPES) is disordered. The Mg(2+) site is built by D512 and D516.

It in the N-terminal section; belongs to the terpene synthase family. The protein in the C-terminal section; belongs to the FPP/GGPP synthase family. Requires Mg(2+) as cofactor.

The catalysed reaction is (2E,6E,10E,14E)-geranylfarnesyl diphosphate = preasperterpenoid A + diphosphate. The protein operates within secondary metabolite biosynthesis; terpenoid biosynthesis. Functionally, bifunctional sesterterpene synthase; part of the gene cluster that mediates the biosynthesis of the asperterpenoids, sesterterpenes that exhibit anti-tuberculosis activity. The first step of the pathway is performed by the sesterterpene synthase astC that possesses both prenyl transferase and terpene cyclase activity, converting isopentenyl diphosphate and dimethylallyl diphosphate into geranylfarnesyl diphosphate (GFPP) and further converting GFPP into preasperterpenoid A, respectively. The cytochrome P450 monooxygenase astB then dually oxidizes preasperterpenoid A to produce asperterpenoid A along with a minor product, asperterpenoid B. Finally, the cytochrome P450 monooxygenase astA converts asperterpenoid A into asperterpenoid C. In Talaromyces wortmannii (Penicillium wortmannii), this protein is Bifunctional sesterterpene synthase astC.